A 622-amino-acid chain; its full sequence is Chaperone protein HscA homolog (622 aa).

This sequence belongs to the heat shock protein 70 family.

Functionally, chaperone involved in the maturation of iron-sulfur cluster-containing proteins. Has a low intrinsic ATPase activity which is markedly stimulated by HscB. The polypeptide is Chaperone protein HscA homolog (Azoarcus sp. (strain BH72)).